We begin with the raw amino-acid sequence, 481 residues long: Putative cytochrome P450 520B1 (481 aa).

Position 427 (Cys427) interacts with heme.

Belongs to the cytochrome P450 family. Heme is required as a cofactor.

The sequence is that of Putative cytochrome P450 520B1 (cyp520B1) from Dictyostelium discoideum (Social amoeba).